The following is a 411-amino-acid chain: MKMSEIRRNVPVNEQIQLLKRGVVDLVSEEDLKRKIEKGEPLRVKLGADPTRPDLHLGHAVILRKMRQFQDLGHKVIMLIGDFTATIGDPSGKSKTRPPLSLEEARANAESYLAQCRLILRQEPEALEIRYNSEWLEQLGYKDIIGLAAKYTVARILERDDFTKRLSAGTPISMHELLYPLTQGYDSVALHADVELGGTDQLFNNLVGRALQRDYGQEAQVVLTLPLLVGLDGTEKMSKSLDNYIGLTDEPHAMFAGLMKVPDPLLDNYFTLLTDLPRERIEELLAGHPVAAHRELAREVVRAFHPDADLDAAEARFRSVAKGGIPDNIPAVSVPASELNEQGHVSMAKLVVLAGLEPSNGAARKLIQNRGLKLGGETYSDPQGQLTREQLTEGVVIQKGKDKFARLVLEG.

The 'HIGH' region motif lies at 50–59 (PTRPDLHLGH). The 'KMSKS' region motif lies at 236-240 (KMSKS). Position 239 (Lys-239) interacts with ATP. The S4 RNA-binding domain occupies 345–409 (VSMAKLVVLA…GKDKFARLVL (65 aa)).

This sequence belongs to the class-I aminoacyl-tRNA synthetase family. TyrS type 2 subfamily. As to quaternary structure, homodimer.

The protein resides in the cytoplasm. The catalysed reaction is tRNA(Tyr) + L-tyrosine + ATP = L-tyrosyl-tRNA(Tyr) + AMP + diphosphate + H(+). In terms of biological role, catalyzes the attachment of tyrosine to tRNA(Tyr) in a two-step reaction: tyrosine is first activated by ATP to form Tyr-AMP and then transferred to the acceptor end of tRNA(Tyr). The polypeptide is Tyrosine--tRNA ligase (Deinococcus radiodurans (strain ATCC 13939 / DSM 20539 / JCM 16871 / CCUG 27074 / LMG 4051 / NBRC 15346 / NCIMB 9279 / VKM B-1422 / R1)).